A 65-amino-acid polypeptide reads, in one-letter code: Large ribosomal subunit protein bL35 (65 aa).

The span at 1 to 16 (MPKMKTKSSAKKRFKV) shows a compositional bias: basic residues. Residues 1–26 (MPKMKTKSSAKKRFKVRSSGGIKRSQ) are disordered.

This sequence belongs to the bacterial ribosomal protein bL35 family.

This is Large ribosomal subunit protein bL35 from Azoarcus sp. (strain BH72).